A 469-amino-acid polypeptide reads, in one-letter code: Ribosomal protein uS12 methylthiotransferase RimO (469 aa).

Residues Asn34 to Pro144 enclose the MTTase N-terminal domain. [4Fe-4S] cluster is bound by residues Cys43, Cys79, Cys108, Cys176, Cys180, and Cys183. One can recognise a Radical SAM core domain in the interval Leu162–Ala399. A TRAM domain is found at Gln402–Arg468.

This sequence belongs to the methylthiotransferase family. RimO subfamily. [4Fe-4S] cluster serves as cofactor.

It localises to the cytoplasm. The enzyme catalyses L-aspartate(89)-[ribosomal protein uS12]-hydrogen + (sulfur carrier)-SH + AH2 + 2 S-adenosyl-L-methionine = 3-methylsulfanyl-L-aspartate(89)-[ribosomal protein uS12]-hydrogen + (sulfur carrier)-H + 5'-deoxyadenosine + L-methionine + A + S-adenosyl-L-homocysteine + 2 H(+). Its function is as follows. Catalyzes the methylthiolation of an aspartic acid residue of ribosomal protein uS12. The protein is Ribosomal protein uS12 methylthiotransferase RimO of Vibrio vulnificus (strain CMCP6).